We begin with the raw amino-acid sequence, 129 residues long: Small ribosomal subunit protein uS11c (129 aa).

This sequence belongs to the universal ribosomal protein uS11 family. In terms of assembly, part of the 30S ribosomal subunit.

It localises to the plastid. It is found in the chloroplast. In Cyanidium caldarium (Red alga), this protein is Small ribosomal subunit protein uS11c.